Consider the following 320-residue polypeptide: V-set and transmembrane domain-containing protein 4 (320 aa).

A signal peptide spans methionine 1–alanine 23. Residues leucine 24–serine 155 enclose the Ig-like domain. Over leucine 24–tyrosine 180 the chain is Extracellular. N-linked (GlcNAc...) asparagine glycans are attached at residues asparagine 25, asparagine 41, asparagine 89, and asparagine 144. Residues cysteine 46 and cysteine 127 are joined by a disulfide bond. Residues alanine 181 to tryptophan 201 traverse the membrane as a helical segment. Residues glutamine 202 to leucine 320 are Cytoplasmic-facing.

In terms of processing, proteolytically cleaved to generate a bioactive peptide.

It is found in the secreted. The protein localises to the cell membrane. In terms of biological role, peptide Lv enhances L-type voltage-gated calcium channel (L-VGCC) currents in retinal photoreceptors. The chain is V-set and transmembrane domain-containing protein 4 (VSTM4) from Homo sapiens (Human).